We begin with the raw amino-acid sequence, 913 residues long: Protein translocase subunit SecA (913 aa).

Residues Gln-87, 105–109 (GEGKT), and Asp-512 contribute to the ATP site. Residues Cys-897, Cys-899, Cys-908, and His-909 each coordinate Zn(2+).

The protein belongs to the SecA family. In terms of assembly, monomer and homodimer. Part of the essential Sec protein translocation apparatus which comprises SecA, SecYEG and auxiliary proteins SecDF-YajC and YidC. Zn(2+) serves as cofactor.

It localises to the cell inner membrane. The protein localises to the cytoplasm. It catalyses the reaction ATP + H2O + cellular proteinSide 1 = ADP + phosphate + cellular proteinSide 2.. Functionally, part of the Sec protein translocase complex. Interacts with the SecYEG preprotein conducting channel. Has a central role in coupling the hydrolysis of ATP to the transfer of proteins into and across the cell membrane, serving both as a receptor for the preprotein-SecB complex and as an ATP-driven molecular motor driving the stepwise translocation of polypeptide chains across the membrane. The sequence is that of Protein translocase subunit SecA from Pseudomonas syringae pv. syringae (strain B728a).